The following is a 188-amino-acid chain: Putative nucleotidase OB0422 (188 aa).

The protein belongs to the 5'(3')-deoxyribonucleotidase family.

The sequence is that of Putative nucleotidase OB0422 from Oceanobacillus iheyensis (strain DSM 14371 / CIP 107618 / JCM 11309 / KCTC 3954 / HTE831).